The following is a 501-amino-acid chain: L-arabinose isomerase (501 aa).

Residues glutamate 306, glutamate 333, histidine 350, and histidine 449 each coordinate Mn(2+).

Belongs to the arabinose isomerase family. The cofactor is Mn(2+).

It carries out the reaction beta-L-arabinopyranose = L-ribulose. The protein operates within carbohydrate degradation; L-arabinose degradation via L-ribulose; D-xylulose 5-phosphate from L-arabinose (bacterial route): step 1/3. Its function is as follows. Catalyzes the conversion of L-arabinose to L-ribulose. In Herpetosiphon aurantiacus (strain ATCC 23779 / DSM 785 / 114-95), this protein is L-arabinose isomerase.